The chain runs to 875 residues: Neurotrypsin (875 aa).

Residues 1–20 (MTLARFVLALMLGALPEVVG) form the signal peptide. An N-linked (GlcNAc...) asparagine glycan is attached at asparagine 26. The disordered stretch occupies residues 29–88 (LHHSHRHSPPAGPHYPYYLPTQQRPPRTRPPPPLPRFPRPPRALPAQRPHALQAGHTPRP). Pro residues predominate over residues 56 to 71 (TRPPPPLPRFPRPPRA). The 73-residue stretch at 93 to 165 (CPAGEPWVSV…GKVDWGYCDC (73 aa)) folds into the Kringle domain. 20 disulfides stabilise this stretch: cysteine 93–cysteine 165, cysteine 109–cysteine 149, cysteine 138–cysteine 163, cysteine 195–cysteine 259, cysteine 208–cysteine 269, cysteine 239–cysteine 249, cysteine 305–cysteine 369, cysteine 318–cysteine 379, cysteine 349–cysteine 359, cysteine 412–cysteine 475, cysteine 425–cysteine 485, cysteine 455–cysteine 465, cysteine 525–cysteine 589, cysteine 538–cysteine 599, cysteine 569–cysteine 579, cysteine 619–cysteine 750, cysteine 661–cysteine 677, cysteine 765–cysteine 831, cysteine 794–cysteine 808, and cysteine 821–cysteine 850. 4 consecutive SRCR domains span residues 170-271 (VRLR…TCSF), 280-381 (IRLA…SCTP), 387-487 (IRLA…ACYP), and 500-601 (VRLM…ICDY). Positions 619–630 (CGLRLLHRRQKR) are zymogen activation region. A Peptidase S1 domain is found at 631–874 (IIGGKNSLRG…FVPWIKSVTK (244 aa)). The active-site Charge relay system is histidine 676. Residue asparagine 683 is glycosylated (N-linked (GlcNAc...) asparagine). The Charge relay system role is filled by aspartate 726. The active-site Charge relay system is serine 825.

Belongs to the peptidase S1 family. Brain and Leydig cells of the testis.

It localises to the secreted. In terms of biological role, plays a role in neuronal plasticity and the proteolytic action may subserve structural reorganizations associated with learning and memory operations. The polypeptide is Neurotrypsin (PRSS12) (Homo sapiens (Human)).